Here is a 149-residue protein sequence, read N- to C-terminus: Large ribosomal subunit protein eL24B (149 aa).

Residue Ser50 is modified to Phosphoserine. Residues 96–149 form a disordered region; it reads QRPEVRAAARAAALKQRKDKRAASESEKKAIKAKSAASSARGQAIKNAKVAARR. Residues 116–125 show a composition bias toward basic and acidic residues; it reads RAASESEKKA.

It belongs to the eukaryotic ribosomal protein eL24 family. In terms of assembly, component of the large ribosomal subunit (LSU). Mature yeast ribosomes consist of a small (40S) and a large (60S) subunit. The 40S small subunit contains 1 molecule of ribosomal RNA (18S rRNA) and at least 33 different proteins. The large 60S subunit contains 3 rRNA molecules (25S, 5.8S and 5S rRNA) and at least 46 different proteins.

The protein localises to the cytoplasm. In terms of biological role, component of the ribosome, a large ribonucleoprotein complex responsible for the synthesis of proteins in the cell. The small ribosomal subunit (SSU) binds messenger RNAs (mRNAs) and translates the encoded message by selecting cognate aminoacyl-transfer RNA (tRNA) molecules. The large subunit (LSU) contains the ribosomal catalytic site termed the peptidyl transferase center (PTC), which catalyzes the formation of peptide bonds, thereby polymerizing the amino acids delivered by tRNAs into a polypeptide chain. The nascent polypeptides leave the ribosome through a tunnel in the LSU and interact with protein factors that function in enzymatic processing, targeting, and the membrane insertion of nascent chains at the exit of the ribosomal tunnel. This Schizosaccharomyces pombe (strain 972 / ATCC 24843) (Fission yeast) protein is Large ribosomal subunit protein eL24B (rpl2402).